Consider the following 713-residue polypeptide: Metal transporter CNNM3 (713 aa).

The helical transmembrane segment at 7-29 threads the bilayer; it reads AVVGWLGWVLAAFCLGSTAGEAA. The N-linked (GlcNAc...) asparagine glycan is linked to asparagine 73. The region spanning 136-314 is the CNNM transmembrane domain; it reads EAAPPWALGL…DPYSDLSKGV (179 aa). The next 4 membrane-spanning stretches (helical) occupy residues 137–157, 199–219, 227–247, and 267–287; these read AAPP…AAVA, CALG…AVLL, AVPA…VLPA, and LAVL…ELAA. 2 CBS domains span residues 324-385 and 392-458; these read LTPL…CTPL and YNHP…ILDE. The interval 664–713 is disordered; it reads LPPSPENAELQAIPGSQTRLLGDKSRETAGSTNSRPSIPVEESPGRNPGV. A phosphoserine mark is found at serine 667 and serine 706.

It belongs to the ACDP family. In terms of tissue distribution, widely expressed with highest levels in brain, kidney, liver, lung and heart.

It is found in the cell membrane. In terms of biological role, probable metal transporter. In Mus musculus (Mouse), this protein is Metal transporter CNNM3 (Cnnm3).